We begin with the raw amino-acid sequence, 71 residues long: Cytochrome c oxidase subunit 7, mitochondrial (71 aa).

Topologically, residues 1–35 are mitochondrial matrix; sequence MPGLVNAPNHVPEKQRYYQQAFKNHTRLWKIGPRS. A helical membrane pass occupies residues 36–58; that stretch reads GIIMTTFNIAMWGTFGASMYAMS. Residues 59–71 are Mitochondrial intermembrane-facing; it reads RKVLGYNTWFSED.

Belongs to the cytochrome c oxidase VIIa family. As to quaternary structure, component of the cytochrome c oxidase (complex IV, CIV), a multisubunit enzyme composed of 11 subunits. The complex is composed of a catalytic core of 3 subunits Cox1, Cox2 and Cox3, encoded in the mitochondrial DNA, and 8 supernumerary subunits Cox4, Cox5a/Cox5, Cox6, Cox7, Cox8, Cox7a/Cox9, Cox6b/Cox12 and Cox6a/Cox13, which are encoded in the nuclear genome. The complex exists as a monomer or a dimer and forms respiratory supercomplexes (SCs) in the inner mitochondrial membrane with NADH-ubiquinone oxidoreductase (complex I, CI) and ubiquinol-cytochrome c oxidoreductase (cytochrome b-c1 complex, complex III, CIII), resulting in various different assemblies (supercomplexes I(1)IV(1), I(1)III(3)IV(2), III(2)IV(1) and III(2)IV(2) as well as larger supercomplexes of compositions like I(1)III(2)IV(5-6)).

Its subcellular location is the mitochondrion inner membrane. It functions in the pathway energy metabolism; oxidative phosphorylation. In terms of biological role, component of the cytochrome c oxidase, the last enzyme in the mitochondrial electron transport chain which drives oxidative phosphorylation. The respiratory chain contains 3 multisubunit complexes succinate dehydrogenase (complex II, CII), ubiquinol-cytochrome c oxidoreductase (cytochrome b-c1 complex, complex III, CIII) and cytochrome c oxidase (complex IV, CIV), that cooperate to transfer electrons derived from NADH and succinate to molecular oxygen, creating an electrochemical gradient over the inner membrane that drives transmembrane transport and the ATP synthase. Cytochrome c oxidase is the component of the respiratory chain that catalyzes the reduction of oxygen to water. Electrons originating from reduced cytochrome c in the intermembrane space (IMS) are transferred via the dinuclear copper A center (CU(A)) of Cox2 and heme A of Cox1 to the active site in Cox1, a binuclear center (BNC) formed by heme A3 and copper B (CU(B)). The BNC reduces molecular oxygen to 2 water molecules using 4 electrons from cytochrome c in the IMS and 4 protons from the mitochondrial matrix. This chain is Cytochrome c oxidase subunit 7, mitochondrial, found in Neurospora crassa (strain ATCC 24698 / 74-OR23-1A / CBS 708.71 / DSM 1257 / FGSC 987).